Here is a 505-residue protein sequence, read N- to C-terminus: NADH-quinone oxidoreductase subunit N 1 (505 aa).

The next 14 helical transmembrane spans lie at 18 to 38, 45 to 65, 84 to 104, 116 to 136, 138 to 158, 173 to 193, 223 to 243, 271 to 291, 292 to 312, 319 to 339, 345 to 365, 391 to 411, 429 to 449, and 473 to 493; these read LIPEIALGCLALLLLVVEMVL, LIATIAIIGQFGILGWVAWDF, YVGQAMRVFFLLSSIFVSILA, IEFYHIVLVATAAMMLLAQAN, FVLFFVALETLTVGLYILVSY, LIMGALSSSLLLFGIVLLYGV, FLAAAGIVLVLSGIAFKIGAF, AGFAILLVLVNSVFGPYWWLV, QPVLVAMAVATILFGNIAALT, LIGLSGVSHAGFLLIGIIASH, VGAVLFYLFAYLLATFAVFGV, FLAAILAVALGSLAGIPPLAG, GLLAVAIVGVVISIYYYFGWI, and VGAAAGVALATLALCSILFGV.

This sequence belongs to the complex I subunit 2 family. As to quaternary structure, NDH-1 is composed of 14 different subunits. Subunits NuoA, H, J, K, L, M, N constitute the membrane sector of the complex.

It is found in the cell inner membrane. The catalysed reaction is a quinone + NADH + 5 H(+)(in) = a quinol + NAD(+) + 4 H(+)(out). NDH-1 shuttles electrons from NADH, via FMN and iron-sulfur (Fe-S) centers, to quinones in the respiratory chain. The immediate electron acceptor for the enzyme in this species is believed to be ubiquinone. Couples the redox reaction to proton translocation (for every two electrons transferred, four hydrogen ions are translocated across the cytoplasmic membrane), and thus conserves the redox energy in a proton gradient. In Opitutus terrae (strain DSM 11246 / JCM 15787 / PB90-1), this protein is NADH-quinone oxidoreductase subunit N 1.